Consider the following 278-residue polypeptide: Probable endonuclease 4 (278 aa).

Residues H67, H107, E141, D173, H176, H210, D223, H225, and E255 each coordinate Zn(2+).

It belongs to the AP endonuclease 2 family. Zn(2+) is required as a cofactor.

It catalyses the reaction Endonucleolytic cleavage to 5'-phosphooligonucleotide end-products.. Endonuclease IV plays a role in DNA repair. It cleaves phosphodiester bonds at apurinic or apyrimidinic (AP) sites, generating a 3'-hydroxyl group and a 5'-terminal sugar phosphate. This Natronomonas pharaonis (strain ATCC 35678 / DSM 2160 / CIP 103997 / JCM 8858 / NBRC 14720 / NCIMB 2260 / Gabara) (Halobacterium pharaonis) protein is Probable endonuclease 4.